The sequence spans 389 residues: Na(+)/H(+) antiporter NhaA (389 aa).

11 helical membrane-spanning segments follow: residues 14 to 34, 59 to 79, 95 to 115, 124 to 144, 154 to 174, 177 to 197, 213 to 233, 257 to 277, 292 to 312, 328 to 348, and 363 to 383; these read AGGI…NSPL, LILW…GLEV, SLPT…YLLF, AGWA…MALL, VFLL…IALF, TDLS…LVGL, LILW…GVII, PWST…VYVG, IALG…YIAV, IAPV…IASL, and LGTL…LSKV.

This sequence belongs to the NhaA Na(+)/H(+) (TC 2.A.33) antiporter family.

The protein resides in the cell inner membrane. The enzyme catalyses Na(+)(in) + 2 H(+)(out) = Na(+)(out) + 2 H(+)(in). Its function is as follows. Na(+)/H(+) antiporter that extrudes sodium in exchange for external protons. The chain is Na(+)/H(+) antiporter NhaA from Shewanella baltica (strain OS195).